Reading from the N-terminus, the 185-residue chain is Ribosome-recycling factor (185 aa).

It belongs to the RRF family.

It is found in the cytoplasm. In terms of biological role, responsible for the release of ribosomes from messenger RNA at the termination of protein biosynthesis. May increase the efficiency of translation by recycling ribosomes from one round of translation to another. In Syntrophus aciditrophicus (strain SB), this protein is Ribosome-recycling factor.